We begin with the raw amino-acid sequence, 608 residues long: 1-deoxy-D-xylulose-5-phosphate synthase (608 aa).

Thiamine diphosphate-binding positions include His-66 and Gly-107–Ala-109. Asp-138 serves as a coordination point for Mg(2+). Thiamine diphosphate-binding positions include Gly-139–Ala-140, Asn-167, Phe-277, and Glu-350. Asn-167 provides a ligand contact to Mg(2+).

The protein belongs to the transketolase family. DXPS subfamily. Homodimer. It depends on Mg(2+) as a cofactor. The cofactor is thiamine diphosphate.

The catalysed reaction is D-glyceraldehyde 3-phosphate + pyruvate + H(+) = 1-deoxy-D-xylulose 5-phosphate + CO2. It participates in metabolic intermediate biosynthesis; 1-deoxy-D-xylulose 5-phosphate biosynthesis; 1-deoxy-D-xylulose 5-phosphate from D-glyceraldehyde 3-phosphate and pyruvate: step 1/1. In terms of biological role, catalyzes the acyloin condensation reaction between C atoms 2 and 3 of pyruvate and glyceraldehyde 3-phosphate to yield 1-deoxy-D-xylulose-5-phosphate (DXP). This Thermotoga sp. (strain RQ2) protein is 1-deoxy-D-xylulose-5-phosphate synthase.